The primary structure comprises 381 residues: NF-kappa-B inhibitor-like protein 1 (381 aa).

The disordered stretch occupies residues Met1–Arg32. Residues Ser14–Ser26 are compositionally biased toward polar residues. ANK repeat units follow at residues Gly64–His93 and His97–Lys133. Disordered stretches follow at residues Gly129–Arg166, Asp186–Glu242, and Leu257–Leu294. Phosphoserine is present on Ser150. The span at Ser150–Val159 shows a compositional bias: acidic residues. 2 stretches are compositionally biased toward basic and acidic residues: residues Arg204–Arg228 and Leu257–Gly270.

In terms of assembly, interacts with CACTIN (via N-terminal domain); the interaction occurs in a pro-inflammatory-independent manner.

The protein localises to the nucleus. Involved in the regulation of innate immune response. Acts as negative regulator of Toll-like receptor and interferon-regulatory factor (IRF) signaling pathways. Contributes to the negative regulation of transcriptional activation of NF-kappa-B target genes in response to endogenous pro-inflammatory stimuli. This chain is NF-kappa-B inhibitor-like protein 1 (Nfkbil1), found in Rattus norvegicus (Rat).